Here is a 154-residue protein sequence, read N- to C-terminus: Endoribonuclease YbeY (154 aa).

Zn(2+)-binding residues include histidine 113, histidine 117, and histidine 123.

This sequence belongs to the endoribonuclease YbeY family. Requires Zn(2+) as cofactor.

It is found in the cytoplasm. Single strand-specific metallo-endoribonuclease involved in late-stage 70S ribosome quality control and in maturation of the 3' terminus of the 16S rRNA. This chain is Endoribonuclease YbeY, found in Vibrio parahaemolyticus serotype O3:K6 (strain RIMD 2210633).